Consider the following 161-residue polypeptide: Transcription elongation factor GreA (161 aa).

The protein belongs to the GreA/GreB family.

Functionally, necessary for efficient RNA polymerase transcription elongation past template-encoded arresting sites. The arresting sites in DNA have the property of trapping a certain fraction of elongating RNA polymerases that pass through, resulting in locked ternary complexes. Cleavage of the nascent transcript by cleavage factors such as GreA or GreB allows the resumption of elongation from the new 3'terminus. GreA releases sequences of 2 to 3 nucleotides. This chain is Transcription elongation factor GreA, found in Desulfotalea psychrophila (strain LSv54 / DSM 12343).